We begin with the raw amino-acid sequence, 427 residues long: Serine--tRNA ligase (427 aa).

231–233 (TAE) contributes to the L-serine binding site. ATP is bound at residue 262–264 (RSE). E285 contacts L-serine. 349 to 352 (EISS) contributes to the ATP binding site. Residue S385 coordinates L-serine.

Belongs to the class-II aminoacyl-tRNA synthetase family. Type-1 seryl-tRNA synthetase subfamily. Homodimer. The tRNA molecule binds across the dimer.

It localises to the cytoplasm. The enzyme catalyses tRNA(Ser) + L-serine + ATP = L-seryl-tRNA(Ser) + AMP + diphosphate + H(+). It carries out the reaction tRNA(Sec) + L-serine + ATP = L-seryl-tRNA(Sec) + AMP + diphosphate + H(+). It participates in aminoacyl-tRNA biosynthesis; selenocysteinyl-tRNA(Sec) biosynthesis; L-seryl-tRNA(Sec) from L-serine and tRNA(Sec): step 1/1. Functionally, catalyzes the attachment of serine to tRNA(Ser). Is also able to aminoacylate tRNA(Sec) with serine, to form the misacylated tRNA L-seryl-tRNA(Sec), which will be further converted into selenocysteinyl-tRNA(Sec). The protein is Serine--tRNA ligase of Brucella melitensis biotype 2 (strain ATCC 23457).